The chain runs to 509 residues: tRNA-2-methylthio-N(6)-dimethylallyladenosine synthase (509 aa).

Residues 1–21 form a disordered region; it reads MNEKQKLESGQVHPSDKKSEK. In terms of domain architecture, MTTase N-terminal spans 66–184; the sequence is RKFYIRTYGC…LPELLSEAYL (119 aa). [4Fe-4S] cluster-binding residues include Cys75, Cys111, Cys145, Cys221, Cys225, and Cys228. Positions 207-437 constitute a Radical SAM core domain; sequence RNGKIKGWVN…NALVNEISAK (231 aa). The TRAM domain occupies 440–503; that stretch reads KEYEGKVVEV…TWSLDGEMVG (64 aa).

This sequence belongs to the methylthiotransferase family. MiaB subfamily. Monomer. Requires [4Fe-4S] cluster as cofactor.

The protein localises to the cytoplasm. The catalysed reaction is N(6)-dimethylallyladenosine(37) in tRNA + (sulfur carrier)-SH + AH2 + 2 S-adenosyl-L-methionine = 2-methylsulfanyl-N(6)-dimethylallyladenosine(37) in tRNA + (sulfur carrier)-H + 5'-deoxyadenosine + L-methionine + A + S-adenosyl-L-homocysteine + 2 H(+). It carries out the reaction N(6)-dimethylallyladenosine(37) in tRNA + (sulfur carrier)-SH + AH2 + S-adenosyl-L-methionine = 2-thio-N(6)-dimethylallyladenosine(37) in tRNA + (sulfur carrier)-H + 5'-deoxyadenosine + L-methionine + A + H(+). The enzyme catalyses 2-thio-N(6)-dimethylallyladenosine(37) in tRNA + S-adenosyl-L-methionine = 2-methylsulfanyl-N(6)-dimethylallyladenosine(37) in tRNA + S-adenosyl-L-homocysteine + H(+). Its function is as follows. Catalyzes the methylthiolation of N6-(dimethylallyl)adenosine (i(6)A), leading to the formation of 2-methylthio-N6-(dimethylallyl)adenosine (ms(2)i(6)A) at position 37 in tRNAs that read codons beginning with uridine. The protein is tRNA-2-methylthio-N(6)-dimethylallyladenosine synthase of Bacillus subtilis (strain 168).